Reading from the N-terminus, the 406-residue chain is Cysteine desulfurase (406 aa).

Lys-226 carries the post-translational modification N6-(pyridoxal phosphate)lysine. Cys-364 functions as the Cysteine persulfide intermediate in the catalytic mechanism.

Belongs to the class-V pyridoxal-phosphate-dependent aminotransferase family. Csd subfamily. In terms of assembly, homodimer. Interacts with SufE and the SufBCD complex composed of SufB, SufC and SufD. The interaction with SufE is required to mediate the direct transfer of the sulfur atom from the S-sulfanylcysteine. It depends on pyridoxal 5'-phosphate as a cofactor.

It is found in the cytoplasm. It catalyses the reaction (sulfur carrier)-H + L-cysteine = (sulfur carrier)-SH + L-alanine. It carries out the reaction L-selenocysteine + AH2 = hydrogenselenide + L-alanine + A + H(+). It functions in the pathway cofactor biosynthesis; iron-sulfur cluster biosynthesis. Its function is as follows. Cysteine desulfurases mobilize the sulfur from L-cysteine to yield L-alanine, an essential step in sulfur metabolism for biosynthesis of a variety of sulfur-containing biomolecules. Component of the suf operon, which is activated and required under specific conditions such as oxidative stress and iron limitation. Acts as a potent selenocysteine lyase in vitro, that mobilizes selenium from L-selenocysteine. Selenocysteine lyase activity is however unsure in vivo. The protein is Cysteine desulfurase of Escherichia coli O157:H7 (strain EC4115 / EHEC).